We begin with the raw amino-acid sequence, 591 residues long: MDFASSKKRKFKDANGVKPSKGKKSSSIPDKKSKKVKRAEPEPHDEPEDDSSDEEEQALKEVEDESDQADEDVEAANSAEEEEEEGGDEDNAENNTDLPNGGQLTLPPVAGAEAQSFEELKLSEKTMKAINEMKFTKMTEIQRRGIPPSLAGRDVLGAAKTGSGKTLAFLIPVIEMLSSLRFKPRNGTGVIVVSPTRELALQIFGVARELMAHHSQTYGIVIGGANRRAEAEKLAKGVNLLIATPGRLLDHLQNTPFVFKNLKSLVIDEADRILEIGFEDEMRQIIKVLPKEDRQTMLFSATQTTKVEDLARISLRPGPLYINVDEEKQYSTVEGLEQGYIICETDMRFLLLFSFLKRNLKKKIIVFFSSCACVKYHAELLNYIDLPVLDLHGKQKQQKRTNTFFEFCNAKQGTLICTDVAARGLDIPSVDWIIQFDPPDDPRDYIHRVGRTARGSNNKGRSLMFLQPNELGFLSHLKAARVPVAEFNFPTKKIINVQSQLEKLISQNYYLNKSAKDGYRSYMHAYASHSLRSVFDINKLDLAKVAKSFGFTQPPRVDITLGASMSRDKKQQGRRAYGSQPRQNQGNKFTR.

The segment covering 1–11 (MDFASSKKRKF) has biased composition (basic residues). The tract at residues 1–108 (MDFASSKKRK…PNGGQLTLPP (108 aa)) is disordered. The segment covering 45–92 (DEPEDDSSDEEEQALKEVEDESDQADEDVEAANSAEEEEEEGGDEDNA) has biased composition (acidic residues). Positions 115–143 (QSFEELKLSEKTMKAINEMKFTKMTEIQR) match the Q motif motif. One can recognise a Helicase ATP-binding domain in the interval 146-321 (IPPSLAGRDV…RISLRPGPLY (176 aa)). Residue 159 to 166 (AKTGSGKT) coordinates ATP. Positions 268 to 271 (DEAD) match the DEAD box motif. The 161-residue stretch at 335-495 (GLEQGYIICE…EFNFPTKKII (161 aa)) folds into the Helicase C-terminal domain. Residues 347–363 (MRFLLLFSFLKRNLKKK) carry the Bipartite nuclear localization signal motif. Positions 560–591 (TLGASMSRDKKQQGRRAYGSQPRQNQGNKFTR) are disordered. A compositionally biased stretch (polar residues) spans 580-591 (QPRQNQGNKFTR).

This sequence belongs to the DEAD box helicase family. DDX18/HAS1 subfamily. Associates in the nucleolus with the 60S and pre-60S ribosomal subunits.

It localises to the nucleus. Its subcellular location is the nucleolus. The enzyme catalyses ATP + H2O = ADP + phosphate + H(+). In terms of biological role, ATP-dependent RNA helicase involved in 40S ribosomal subunit biogenesis. Required for the processing and cleavage of 35S pre-rRNA at sites A0, A1, and A2, leading to mature 18S rRNA. This is ATP-dependent RNA helicase HAS1 (HAS1) from Gibberella zeae (strain ATCC MYA-4620 / CBS 123657 / FGSC 9075 / NRRL 31084 / PH-1) (Wheat head blight fungus).